The following is a 156-amino-acid chain: Small ribosomal subunit protein uS7 (156 aa).

Belongs to the universal ribosomal protein uS7 family. In terms of assembly, part of the 30S ribosomal subunit. Contacts proteins S9 and S11.

In terms of biological role, one of the primary rRNA binding proteins, it binds directly to 16S rRNA where it nucleates assembly of the head domain of the 30S subunit. Is located at the subunit interface close to the decoding center, probably blocks exit of the E-site tRNA. The protein is Small ribosomal subunit protein uS7 of Acinetobacter baylyi (strain ATCC 33305 / BD413 / ADP1).